The following is an 825-amino-acid chain: PR domain zinc finger protein 1 (825 aa).

Residues 84 to 201 (PRNLLFKYAT…ANQELLVWYC (118 aa)) enclose the SET domain. The segment covering 324-361 (ITRSPIPSSTTPSPSARSSPDQSLKSSSPHSSPGNTVS) has biased composition (low complexity). The segment at 324-369 (ITRSPIPSSTTPSPSARSSPDQSLKSSSPHSSPGNTVSPVGPGSQE) is disordered. Positions 527-574 (HVVQPKATSAAMAAPSSDEAMNLIKNKRNMTGYKTLPYPLKKQNGKIK) are interaction with PIAS1. 4 consecutive C2H2-type zinc fingers follow at residues 575–597 (YECNVCAKTFGQLSNLKVHLRVH), 603–625 (FKCQTCNKGFTQLAHLQKHYLVH), 631–653 (HECQVCHKRFSSTSNLKTHLRLH), and 659–681 (YQCKVCPAKFTQFVHLKLHKRLH). Residue Lys816 forms a Glycyl lysine isopeptide (Lys-Gly) (interchain with G-Cter in SUMO1); alternate linkage. Residue Lys816 forms a Glycyl lysine isopeptide (Lys-Gly) (interchain with G-Cter in SUMO2); alternate linkage.

The protein belongs to the class V-like SAM-binding methyltransferase superfamily. Interacts with PRMT5. Interacts with FBXO10. Interacts with FBXO11. Interacts with multiple nuclear sumoylation E3 ligases, including CBX4, PIAS1, PIAS2, PIAS3, PIAS4, PML and RNF4, but not RANBP2. Interacts with LDB1, SMARCD3 and SMARCC1. Interacts with EEIG1; following TNFSF11/RANKL stimulation in bone marrow-derived macrophages, the interaction promotes the binding of PRDM1/BLIMP1 to the gene promoter of IRF8. Sumoylation at Lys-816 by PIAS1 augments transcriptional repressor activity, and is critical for plasma cell differentiation. Can be sumoylated with SUMO1 and SUMO2 by PML. Degradation of the wild-type protein mostly depends upon sumoylation, rather than ubiquitination. Desumoylated by SENP1 and SENP6. In terms of processing, ubiquitinated by the SCF(FBXO11) complex, leading to its degradation by the proteasome.

It is found in the nucleus. The protein localises to the cytoplasm. Its function is as follows. Transcription factor that mediates a transcriptional program in various innate and adaptive immune tissue-resident lymphocyte T cell types such as tissue-resident memory T (Trm), natural killer (trNK) and natural killer T (NKT) cells and negatively regulates gene expression of proteins that promote the egress of tissue-resident T-cell populations from non-lymphoid organs. Plays a role in the development, retention and long-term establishment of adaptive and innate tissue-resident lymphocyte T cell types in non-lymphoid organs, such as the skin and gut, but also in other nonbarrier tissues like liver and kidney, and therefore may provide immediate immunological protection against reactivating infections or viral reinfection. Binds specifically to the PRDI element in the promoter of the beta-interferon gene. Drives the maturation of B-lymphocytes into Ig secreting cells. Associates with the transcriptional repressor ZNF683 to chromatin at gene promoter regions. Binds to the promoter and acts as a transcriptional repressor of IRF8, thereby promotes transcription of osteoclast differentiation factors such as NFATC1 and EEIG1. The protein is PR domain zinc finger protein 1 (PRDM1) of Homo sapiens (Human).